Reading from the N-terminus, the 106-residue chain is Large ribosomal subunit protein uL22 (106 aa).

It belongs to the universal ribosomal protein uL22 family. Part of the 50S ribosomal subunit.

In terms of biological role, this protein binds specifically to 23S rRNA; its binding is stimulated by other ribosomal proteins, e.g. L4, L17, and L20. It is important during the early stages of 50S assembly. It makes multiple contacts with different domains of the 23S rRNA in the assembled 50S subunit and ribosome. Functionally, the globular domain of the protein is located near the polypeptide exit tunnel on the outside of the subunit, while an extended beta-hairpin is found that lines the wall of the exit tunnel in the center of the 70S ribosome. In Nautilia profundicola (strain ATCC BAA-1463 / DSM 18972 / AmH), this protein is Large ribosomal subunit protein uL22.